Reading from the N-terminus, the 88-residue chain is Small ribosomal subunit protein uS19 (88 aa).

This sequence belongs to the universal ribosomal protein uS19 family.

Functionally, protein S19 forms a complex with S13 that binds strongly to the 16S ribosomal RNA. This chain is Small ribosomal subunit protein uS19, found in Ureaplasma parvum serovar 3 (strain ATCC 27815 / 27 / NCTC 11736).